Consider the following 220-residue polypeptide: ATP-dependent dethiobiotin synthetase BioD (220 aa).

Residue 11–16 (GVGKTF) coordinates ATP. Residue T15 participates in Mg(2+) binding. K36 is a catalytic residue. T40 contacts substrate. Residues D48 and 107–110 (EGAG) contribute to the ATP site. 2 residues coordinate Mg(2+): D48 and E107.

The protein belongs to the dethiobiotin synthetase family. Homodimer. The cofactor is Mg(2+).

It localises to the cytoplasm. The catalysed reaction is (7R,8S)-7,8-diammoniononanoate + CO2 + ATP = (4R,5S)-dethiobiotin + ADP + phosphate + 3 H(+). Its pathway is cofactor biosynthesis; biotin biosynthesis; biotin from 7,8-diaminononanoate: step 1/2. In terms of biological role, catalyzes a mechanistically unusual reaction, the ATP-dependent insertion of CO2 between the N7 and N8 nitrogen atoms of 7,8-diaminopelargonic acid (DAPA, also called 7,8-diammoniononanoate) to form a ureido ring. In Aquifex aeolicus (strain VF5), this protein is ATP-dependent dethiobiotin synthetase BioD.